The chain runs to 432 residues: MTSLYTTLNLTMSIPVVAVALLAAWRLRGPERRRWLIGVGGALLILMILTAVFDNIMISAGLVAYDDSLTSGIRLGVAPIEDFAYAVAAAVFVPSVWALLTASPRVGAEVGSPTVSGRGDALLTRAPEPGDDDEVRTPERPGTPGLLTTLFWSSRPVSWVNTAAPFALAYFLATGGFDLVGVIGTIFFLVPYNLAMYGINDVFDYESDLRNPRKGGVEGSVLERSRHTATLVASAVTTVPFLVYLVLTGTVESSLWLAASAFAVIAYSAKGLRFKEIPFLDSLTSAFHFVSPAIVGWTIAGAELTGGVWACLIAFMLWGAASQAFGAVQDVRFDREADLKSVATVLGARAAVWFALACYVAAVVVLLAAAPWPASGAAFAILPYLATVAAYVGVTDADAERTNEGWKRFLVLNMLAGFCVTQIVLWSVLVWS.

The beta-cyclase stretch occupies residues 1–140; that stretch reads MTSLYTTLNL…DDDEVRTPER (140 aa). A run of 3 helical transmembrane segments spans residues 4–24, 36–56, and 83–103; these read LYTT…LLAA, LIGV…FDNI, and FAYA…LTAS. The disordered stretch occupies residues 111–140; that stretch reads GSPTVSGRGDALLTRAPEPGDDDEVRTPER. Residues 141-432 are elongase/hydratase; sequence PGTPGLLTTL…IVLWSVLVWS (292 aa). 7 consecutive transmembrane segments (helical) span residues 170 to 190, 252 to 272, 277 to 297, 299 to 319, 350 to 370, 374 to 394, and 409 to 429; these read YFLA…FFLV, ESSL…AKGL, IPFL…IVGW, IAGA…MLWG, AAVW…LAAA, ASGA…YVGV, and FLVL…WSVL.

The protein belongs to the UbiA prenyltransferase family. May form a complex with LbtA.

The protein resides in the cell membrane. The catalysed reaction is all-trans-lycopene + dimethylallyl diphosphate + H2O = dihydroisopentenyldehydrorhodopin + diphosphate. The enzyme catalyses isopentenyldehydrorhodopin + dimethylallyl diphosphate + H2O = dihydrobisanhydrobacterioruberin + diphosphate. Its pathway is carotenoid biosynthesis. Its function is as follows. Involved in the biosynthesis of C(50) beta-cyclic carotenoids. The elongase/hydratase domain catalyzes the elongation of lycopene by attaching a C(5) isoprene unit at C-2, as well as the hydroxylation of the previous end of the molecule. The enzyme acts at both ends of the substrate, and catalyzes the conversion of lycopene to the C(45) intermediate dihydroisopentenyldehydrorhodopin (DH-IDR) and the conversion of isopentenyldehydrorhodopin (IDR) to the C(50) carotenoid dihydrobisanhydrobacterioruberin (DH-BABR). The beta-cyclase domain may produce the C(50) beta-cyclic carotenoid C.p.450 from the C(50) carotenoid dihydrobisanhydrobacterioruberin (DH-BABR). The polypeptide is C(50) beta-cyclic carotenoids biosynthesis protein LbtBC (Dietzia sp. (strain CQ4)).